The following is a 199-amino-acid chain: MNKFIVFEGIDGCGKTTQAKLVAEKLNANFTFEPTDGKIGKSIREILAGSKCNKETLALLFAADRVEHVSKIEEDLKNAHVVSDRYVYSSIVYQMTQGIPKDFIYKINDYAKIPDLVVLLDVDLNEALKRMESREKEIFEKLEFQKKIKEGYYNLINSENGKFMPKYGFIVIDTTSKPIDQVFNEILNAIVDKIPDIIQ.

G9–T16 lines the ATP pocket.

The protein belongs to the thymidylate kinase family.

The enzyme catalyses dTMP + ATP = dTDP + ADP. This Methanococcus maripaludis (strain DSM 14266 / JCM 13030 / NBRC 101832 / S2 / LL) protein is Probable thymidylate kinase.